The chain runs to 255 residues: Ribonuclease HII (255 aa).

Residues 72-255 enclose the RNase H type-2 domain; that stretch reads QYIAGIDEAG…RSFAPVKAHE (184 aa). A divalent metal cation is bound by residues aspartate 78, glutamate 79, and aspartate 170.

This sequence belongs to the RNase HII family. Requires Mn(2+) as cofactor. Mg(2+) is required as a cofactor.

The protein resides in the cytoplasm. It carries out the reaction Endonucleolytic cleavage to 5'-phosphomonoester.. Endonuclease that specifically degrades the RNA of RNA-DNA hybrids. This Bacillus licheniformis (strain ATCC 14580 / DSM 13 / JCM 2505 / CCUG 7422 / NBRC 12200 / NCIMB 9375 / NCTC 10341 / NRRL NRS-1264 / Gibson 46) protein is Ribonuclease HII.